The sequence spans 101 residues: Phosphoribosyl-AMP cyclohydrolase (101 aa).

Aspartate 71 is a binding site for Mg(2+). Residue cysteine 72 participates in Zn(2+) binding. Mg(2+) is bound by residues aspartate 73 and aspartate 75. Zn(2+)-binding residues include cysteine 88 and cysteine 95.

It belongs to the PRA-CH family. As to quaternary structure, homodimer. Mg(2+) is required as a cofactor. Requires Zn(2+) as cofactor.

It is found in the cytoplasm. The catalysed reaction is 1-(5-phospho-beta-D-ribosyl)-5'-AMP + H2O = 1-(5-phospho-beta-D-ribosyl)-5-[(5-phospho-beta-D-ribosylamino)methylideneamino]imidazole-4-carboxamide. It functions in the pathway amino-acid biosynthesis; L-histidine biosynthesis; L-histidine from 5-phospho-alpha-D-ribose 1-diphosphate: step 3/9. In terms of biological role, catalyzes the hydrolysis of the adenine ring of phosphoribosyl-AMP. The chain is Phosphoribosyl-AMP cyclohydrolase from Bacillus cytotoxicus (strain DSM 22905 / CIP 110041 / 391-98 / NVH 391-98).